Consider the following 268-residue polypeptide: Imidazole glycerol phosphate synthase subunit HisF (268 aa).

Catalysis depends on residues D12 and D131.

This sequence belongs to the HisA/HisF family. As to quaternary structure, heterodimer of HisH and HisF.

The protein resides in the cytoplasm. The catalysed reaction is 5-[(5-phospho-1-deoxy-D-ribulos-1-ylimino)methylamino]-1-(5-phospho-beta-D-ribosyl)imidazole-4-carboxamide + L-glutamine = D-erythro-1-(imidazol-4-yl)glycerol 3-phosphate + 5-amino-1-(5-phospho-beta-D-ribosyl)imidazole-4-carboxamide + L-glutamate + H(+). It participates in amino-acid biosynthesis; L-histidine biosynthesis; L-histidine from 5-phospho-alpha-D-ribose 1-diphosphate: step 5/9. Its function is as follows. IGPS catalyzes the conversion of PRFAR and glutamine to IGP, AICAR and glutamate. The HisF subunit catalyzes the cyclization activity that produces IGP and AICAR from PRFAR using the ammonia provided by the HisH subunit. The sequence is that of Imidazole glycerol phosphate synthase subunit HisF from Methanoregula boonei (strain DSM 21154 / JCM 14090 / 6A8).